We begin with the raw amino-acid sequence, 111 residues long: MKDPYDVVKRHYVTEKAKMLEGLSLGDGEGKKKGSFCKDPKYIFIVAGDATKPMIAEAIEAIYSAKGVKVKKVNTMCVKPQPTRIFRGRRKGRTAGFKKAIVTFVDGHSIG.

This sequence belongs to the universal ribosomal protein uL23 family. Part of the 50S ribosomal subunit. Contacts protein L29, and trigger factor when it is bound to the ribosome.

Its function is as follows. One of the early assembly proteins it binds 23S rRNA. One of the proteins that surrounds the polypeptide exit tunnel on the outside of the ribosome. Forms the main docking site for trigger factor binding to the ribosome. The sequence is that of Large ribosomal subunit protein uL23 from Chlamydia trachomatis serovar A (strain ATCC VR-571B / DSM 19440 / HAR-13).